A 93-amino-acid polypeptide reads, in one-letter code: Small ribosomal subunit protein bS6 (93 aa).

It belongs to the bacterial ribosomal protein bS6 family.

Its function is as follows. Binds together with bS18 to 16S ribosomal RNA. This Phytoplasma australiense protein is Small ribosomal subunit protein bS6.